A 243-amino-acid polypeptide reads, in one-letter code: tRNA (guanine-N(1)-)-methyltransferase (243 aa).

S-adenosyl-L-methionine contacts are provided by residues Gly-108 and 127-132 (LGDFVL).

Belongs to the RNA methyltransferase TrmD family. Homodimer.

It is found in the cytoplasm. The catalysed reaction is guanosine(37) in tRNA + S-adenosyl-L-methionine = N(1)-methylguanosine(37) in tRNA + S-adenosyl-L-homocysteine + H(+). Its function is as follows. Specifically methylates guanosine-37 in various tRNAs. In Streptococcus equi subsp. zooepidemicus (strain H70), this protein is tRNA (guanine-N(1)-)-methyltransferase.